The primary structure comprises 100 residues: Small ribosomal subunit protein uS14c (100 aa).

This sequence belongs to the universal ribosomal protein uS14 family. In terms of assembly, part of the 30S ribosomal subunit.

The protein resides in the plastid. It localises to the chloroplast. Binds 16S rRNA, required for the assembly of 30S particles. This is Small ribosomal subunit protein uS14c from Ceratophyllum demersum (Rigid hornwort).